Consider the following 357-residue polypeptide: Geranylgeranyl pyrophosphate synthase spyE (357 aa).

The tract at residues 36-60 (EAQSQAVPGTRTETEPTGSSPSDLQ) is disordered. The span at 50–59 (EPTGSSPSDL) shows a compositional bias: polar residues. Positions 84, 87, and 116 each coordinate isopentenyl diphosphate. Mg(2+) contacts are provided by Asp-123 and Asp-127. Arg-132 serves as a coordination point for dimethylallyl diphosphate. Arg-133 provides a ligand contact to isopentenyl diphosphate. Dimethylallyl diphosphate-binding residues include Lys-210, Thr-211, and Gln-244. Asp-247 lines the Mg(2+) pocket. Dimethylallyl diphosphate contacts are provided by Asn-251, Lys-261, and Lys-271.

It belongs to the FPP/GGPP synthase family. Mg(2+) serves as cofactor.

The enzyme catalyses isopentenyl diphosphate + dimethylallyl diphosphate = (2E)-geranyl diphosphate + diphosphate. The catalysed reaction is isopentenyl diphosphate + (2E)-geranyl diphosphate = (2E,6E)-farnesyl diphosphate + diphosphate. It carries out the reaction isopentenyl diphosphate + (2E,6E)-farnesyl diphosphate = (2E,6E,10E)-geranylgeranyl diphosphate + diphosphate. It participates in secondary metabolite biosynthesis; terpenoid biosynthesis. Geranylgeranyl pyrophosphate synthase; part of the gene cluster that mediates the biosynthesis of meroterpenoids called sartorypyrones. Within the pathway, spyE provides the spyF cosubstrate geranylgeranyl pyrophosphate (GGPP) for the prenylation of triacetic acid lactone (TAL). The biosynthesis of sartorypyrones begins with the production of triacetic acid lactone (TAL) by the NR-PKS spyA using one molecule of acetyl-CoA and two molecules of malonyl-CoA. The prenyltransferase spyF then conjugates geranylgeranyl pyrophosphate (GGPP) to TAL to form geranylgeranyl-triacetate lactone, for which the pathway-specific geranylgeranyl pyrophosphate synthase (GGPS) spyE is required to provide GGPP. Subsequently, geranylgeranyl-triacetate lactone is epoxidized at the terminal olein by the FAD-dependent monooxygenase spyC, followed by cyclization of the terpenoid component catalyzed by the terpene cyclase spyD to produce both the bicyclic sartorypyrone F and the monocyclic sartorypyrone D. Finally, the last step of the biosynthesis involves the acetylation of the meroterpenoids sartorypyrones D and F by the acetyltransferase SpyB to produce sartorypyrones A and G, respectively. The chain is Geranylgeranyl pyrophosphate synthase spyE from Aspergillus fumigatus (strain ATCC MYA-4609 / CBS 101355 / FGSC A1100 / Af293) (Neosartorya fumigata).